Here is a 73-residue protein sequence, read N- to C-terminus: Salivary thrombin inhibitor XC-42 (73 aa).

The signal sequence occupies residues 1-23 (MKLQFLFIFIAFCVMLFAQIATA).

Interacts with human F2 (thrombin). Salivary gland (at protein level).

Its subcellular location is the secreted. In terms of biological role, acts as a competitive inhibitor of host thrombin. In Xenopsylla cheopis (Oriental rat flea), this protein is Salivary thrombin inhibitor XC-42.